The primary structure comprises 630 residues: Sodium-dependent serotonin transporter (630 aa).

Residues 1–87 (METTPLNSQK…ERETWGKKVD (87 aa)) are Cytoplasmic-facing. Residues 31–59 (VPTPGDKVESGQISNGYSAVPSPGAGDDT) form a disordered region. Residue tyrosine 47 is modified to Phosphotyrosine. The helical transmembrane segment at 88–112 (FLLSVIGYAVDLGNVWRFPYICYQN) threads the bilayer. Na(+) contacts are provided by glycine 94, alanine 96, valine 97, aspartate 98, and asparagine 101. Aspartate 98 lines the serotonin pocket. Residues 113 to 115 (GGG) lie on the Extracellular side of the membrane. A helical membrane pass occupies residues 116–135 (AFLIPYTIMAIFGGIPLFYM). Residues 136-160 (ELALGQYHRNGCISIWRKICPIFKG) lie on the Cytoplasmic side of the membrane. Tyrosine 142 is subject to Phosphotyrosine. Residues 161–186 (IGYAICIIAFYIASYYNTIMAWALYY) traverse the membrane as a helical segment. Topologically, residues 187–252 (LISSFTDQLP…KGLQDLGGIS (66 aa)) are extracellular. A disulfide bridge connects residues cysteine 200 and cysteine 209. 2 N-linked (GlcNAc...) asparagine glycosylation sites follow: asparagine 208 and asparagine 217. Residues 253–271 (WQLALCIMLIFTVIYFSIW) traverse the membrane as a helical segment. The Cytoplasmic segment spans residues 272–277 (KGVKTS). Threonine 276 is subject to Phosphothreonine. Residues 278–297 (GKVVWVTATFPYIILSVLLV) form a helical membrane-spanning segment. At 298-324 (RGATLPGAWRGVLFYLKPNWQKLLETG) the chain is on the extracellular side. Residues 325–347 (VWIDAAAQIFFSLGPGFGVLLAF) form a helical membrane-spanning segment. A Na(+)-binding site is contributed by serine 336. Residues 348–360 (ASYNKFNNNCYQD) are Cytoplasmic-facing. Residues 361-380 (ALVTSVVNCMTSFVSGFVIF) traverse the membrane as a helical segment. Asparagine 368 is a binding site for Na(+). Residues 381–421 (TVLGYMAEMRNEDVSEVAKDAGPSLLFITYAEAIANMPAST) are Extracellular-facing. The chain crosses the membrane as a helical span at residues 422-443 (FFAIIFFLMLITLGLDSTFAGL). Na(+)-binding residues include leucine 434, aspartate 437, and serine 438. Threonine 439 contributes to the serotonin binding site. At 444–463 (EGVITAVLDEFPHIWAKRRE) the chain is on the cytoplasmic side. Residues 464-483 (WFVLAVVITCFFGSLVTLTF) traverse the membrane as a helical segment. Topologically, residues 484-494 (GGAYVVKLLEE) are extracellular. 2 residues coordinate serotonin: glutamate 494 and tyrosine 495. Residues 495 to 516 (YATGPAVLTVALIEAVAVSWFY) traverse the membrane as a helical segment. Topologically, residues 517–538 (GITQFCRDVKEMLGFSPGWFWR) are cytoplasmic. Residues 539-558 (ICWVAISPLFLLFIICSFLM) traverse the membrane as a helical segment. The serotonin site is built by phenylalanine 556 and serine 559. At 559-574 (SPPQLRLFQYNYPHWS) the chain is on the extracellular side. The chain crosses the membrane as a helical span at residues 575–595 (IILGYCIGTSSFVCIPTYIAY). The Cytoplasmic segment spans residues 596–630 (RLISTPGTFKERIIKSITPETPTEIPCGDVRLNAV). The interaction with RAB4A stretch occupies residues 616 to 624 (TPTEIPCGD).

Belongs to the sodium:neurotransmitter symporter (SNF) (TC 2.A.22) family. SLC6A4 subfamily. Monomer or homooligomer. Interacts (via C-terminus) with SCAMP2; the interaction is direct and retains transporter molecules intracellularly. Interacts with filamentous actin and STX1A. Interacts (via the N-terminus) with STX1A (via the H3 domain); this interaction regulates SLC4A6 channel conductance. Interacts with SEC23A, SEC24C and PATJ. Interacts with NOS1; the interaction may diminish the cell surface localization of SERT in the brain and, correspondingly, reduce serotonin reuptake. Interacts with TGFB1I1. Interacts with ITGAV:ITGB3. Interacts (via C-terminus) with ITGB3; this interaction regulates SLC6A4 trafficking. Phosphorylation at Thr-276 increases 5-HT uptake and is required for cGMP-mediated SERT regulation.

It is found in the cell membrane. The protein localises to the endomembrane system. It localises to the endosome membrane. Its subcellular location is the synapse. The protein resides in the cell junction. It is found in the focal adhesion. The protein localises to the cell projection. It localises to the neuron projection. It catalyses the reaction serotonin(out) + K(+)(in) + Na(+)(out) + H(+)(in) = serotonin(in) + K(+)(out) + Na(+)(in) + H(+)(out). In terms of biological role, serotonin transporter that cotransports serotonin with one Na(+) ion in exchange for one K(+) ion and possibly one proton in an overall electroneutral transport cycle. Transports serotonin across the plasma membrane from the extracellular compartment to the cytosol thus limiting serotonin intercellular signaling. Essential for serotonin homeostasis in the central nervous system. In the developing somatosensory cortex, acts in glutamatergic neurons to control serotonin uptake and its trophic functions accounting for proper spatial organization of cortical neurons and elaboration of sensory circuits. In the mature cortex, acts primarily in brainstem raphe neurons to mediate serotonin uptake from the synaptic cleft back into the pre-synaptic terminal thus terminating serotonin signaling at the synapse. Modulates mucosal serotonin levels in the gastrointestinal tract through uptake and clearance of serotonin in enterocytes. Required for enteric neurogenesis and gastrointestinal reflexes. Regulates blood serotonin levels by ensuring rapid high affinity uptake of serotonin from plasma to platelets, where it is further stored in dense granules via vesicular monoamine transporters and then released upon stimulation. Mechanistically, the transport cycle starts with an outward-open conformation having Na1(+) and Cl(-) sites occupied. The binding of a second extracellular Na2(+) ion and serotonin substrate leads to structural changes to outward-occluded to inward-occluded to inward-open, where the Na2(+) ion and serotonin are released into the cytosol. Binding of intracellular K(+) ion induces conformational transitions to inward-occluded to outward-open and completes the cycle by releasing K(+) possibly together with a proton bound to Asp-98 into the extracellular compartment. Na1(+) and Cl(-) ions remain bound throughout the transport cycle. Additionally, displays serotonin-induced channel-like conductance for monovalent cations, mainly Na(+) ions. The channel activity is uncoupled from the transport cycle and may contribute to the membrane resting potential or excitability. In Macaca mulatta (Rhesus macaque), this protein is Sodium-dependent serotonin transporter (SLC6A4).